Consider the following 326-residue polypeptide: D-alanine--D-alanine ligase (326 aa).

The region spanning 114-313 (KRVWLQHGLR…YAELCVSIVS (200 aa)) is the ATP-grasp domain. ATP is bound at residue 140 to 195 (PDRLGLPLILKPPHEGSTVGITKVAGYSDMKEGYAQAAKFDDEVLAEQFIAGRELT). Positions 267, 280, and 282 each coordinate Mg(2+).

Belongs to the D-alanine--D-alanine ligase family. Mg(2+) serves as cofactor. The cofactor is Mn(2+).

It is found in the cytoplasm. It catalyses the reaction 2 D-alanine + ATP = D-alanyl-D-alanine + ADP + phosphate + H(+). The protein operates within cell wall biogenesis; peptidoglycan biosynthesis. In terms of biological role, cell wall formation. The chain is D-alanine--D-alanine ligase from Bordetella petrii (strain ATCC BAA-461 / DSM 12804 / CCUG 43448).